We begin with the raw amino-acid sequence, 219 residues long: Ribose-5-phosphate isomerase A (219 aa).

Residues 28–31 (TGST), 81–84 (DGAD), and 94–97 (KGGG) contribute to the substrate site. Glutamate 103 (proton acceptor) is an active-site residue. Residue lysine 121 participates in substrate binding.

Belongs to the ribose 5-phosphate isomerase family. Homodimer.

It catalyses the reaction aldehydo-D-ribose 5-phosphate = D-ribulose 5-phosphate. Its pathway is carbohydrate degradation; pentose phosphate pathway; D-ribose 5-phosphate from D-ribulose 5-phosphate (non-oxidative stage): step 1/1. In terms of biological role, catalyzes the reversible conversion of ribose-5-phosphate to ribulose 5-phosphate. This chain is Ribose-5-phosphate isomerase A, found in Pectobacterium carotovorum subsp. carotovorum (strain PC1).